Here is a 570-residue protein sequence, read N- to C-terminus: NADPH oxidase 2 (570 aa).

Residues glycine 2 to glycine 9 are Cytoplasmic-facing. Residues leucine 10–glycine 36 form a helical membrane-spanning segment. Over proline 37–leucine 46 the chain is Extracellular. Asparagine 40 carries N-linked (GlcNAc...) asparagine glycosylation. Residues glycine 47–cysteine 72 traverse the membrane as a helical segment. A Ferric oxidoreductase domain is found at arginine 54–valine 286. The Cytoplasmic portion of the chain corresponds to arginine 73–aspartate 95. The chain crosses the membrane as a helical span at residues arginine 96 to arginine 130. Residues histidine 101 and histidine 115 each coordinate heme b. Residues valine 131–proline 163 lie on the Extracellular side of the membrane. Glycyl lysine isopeptide (Lys-Gly) (interchain with G-Cter in ubiquitin) cross-links involve residues lysine 159 and lysine 161. The chain crosses the membrane as a helical span at residues glutamate 164 to threonine 194. Residues lysine 195 to glutamate 203 are Cytoplasmic-facing. Residues arginine 199 and serine 200 each coordinate FAD. A helical transmembrane segment spans residues valine 204 to histidine 222. Tryptophan 206, histidine 209, histidine 222, arginine 226, and isoleucine 227 together coordinate heme b. Over glycine 223–proline 267 the chain is Extracellular. Residue lysine 255 forms a Glycyl lysine isopeptide (Lys-Gly) (interchain with G-Cter in ubiquitin) linkage. Heme b-binding residues include methionine 268, tyrosine 280, and arginine 287. Residues methionine 268–leucine 285 form a helical membrane-spanning segment. Residues valine 286 to phenylalanine 570 are Cytoplasmic-facing. The FAD-binding FR-type domain occupies arginine 287–aspartate 397. Residues lysine 294, lysine 299, lysine 306, lysine 328, and lysine 334 each participate in a glycyl lysine isopeptide (Lys-Gly) (interchain with G-Cter in ubiquitin) cross-link. Positions 337, 338, 339, 341, 354, 356, 361, and 362 each coordinate FAD. Lysine 381 is covalently cross-linked (Glycyl lysine isopeptide (Lys-Gly) (interchain with G-Cter in ubiquitin)). Positions 411, 446, and 481 each coordinate NADPH. Lysine 506 participates in a covalent cross-link: Glycyl lysine isopeptide (Lys-Gly) (interchain with G-Cter in ubiquitin). Arginine 513 provides a ligand contact to NADPH. A Glycyl lysine isopeptide (Lys-Gly) (interchain with G-Cter in ubiquitin) cross-link involves residue lysine 567.

In terms of assembly, component of the phagocyte NADPH oxidase core complex/cytochrome b558 complex, composed of CYBB (heavy chain (beta)) and CYBA (light chain (alpha)). Component of the phagocyte NADPH oxidase complex composed of an obligatory core heterodimer formed by the membrane proteins CYBA and CYBB and the cytosolic regulatory subunits NCF1/p47-phox, NCF2/p67-phox, NCF4/p40-phox and the small GTPase RAC1 or RAC2. Interacts with NCF1 (phosphorylated form). Interacts with NCF2; the interaction is enhanced in the presence of GBP7. Interacts with RAC2. Interacts with RAC1. Interacts with calprotectin (S100A8/9). Interacts with NRROS; the interaction is direct and impairs formation of a stable NADPH oxidase complex. Interacts with CYBC1; CYBC1 may act as a chaperone stabilizing Cytochrome b-245 heterodimer. The CYBA:CYBB complex interacts with GBP7. FAD serves as cofactor. In terms of processing, glycosylated. Phosphorylated on Ser and Thr residues by PKC during neutrophils activation. Phosphorylation enhances the NADPH oxidase activity and stimulates its interaction with RAC2, NCF2/p67-phox, and NCF1/p47-phox. Post-translationally, undergoes 'Lys-48'-linked polyubiquitination, likely by RNF145, triggering endoplasmic reticulum-associated degradation.

Its subcellular location is the cell membrane. It catalyses the reaction NADPH + 2 O2 = 2 superoxide + NADP(+) + H(+). Catalytic subunit of the phagocyte NADPH oxidase complex that mediates the transfer of electrons from cytosolic NADPH to O2 to produce the superoxide anion (O2(-)). In the activated complex, electrons are first transferred from NADPH to flavin adenine dinucleotide (FAD) and subsequently transferred via two heme molecules to molecular oxygen, producing superoxide through an outer-sphere reaction. Activation of the NADPH oxidase complex is initiated by the assembly of cytosolic subunits of the NADPH oxidase complex with the core NADPH oxidase complex to form a complex at the plasma membrane or phagosomal membrane. This activation process is initiated by phosphorylation dependent binding of the cytosolic NCF1/p47-phox subunit to the C-terminus of CYBA/p22-phox. NADPH oxidase complex assembly is impaired through interaction with NRROS. The protein is NADPH oxidase 2 of Mus musculus (Mouse).